A 305-amino-acid polypeptide reads, in one-letter code: Methionyl-tRNA formyltransferase (305 aa).

111–114 (SLLP) contacts (6S)-5,6,7,8-tetrahydrofolate.

The protein belongs to the Fmt family.

It carries out the reaction L-methionyl-tRNA(fMet) + (6R)-10-formyltetrahydrofolate = N-formyl-L-methionyl-tRNA(fMet) + (6S)-5,6,7,8-tetrahydrofolate + H(+). In terms of biological role, attaches a formyl group to the free amino group of methionyl-tRNA(fMet). The formyl group appears to play a dual role in the initiator identity of N-formylmethionyl-tRNA by promoting its recognition by IF2 and preventing the misappropriation of this tRNA by the elongation apparatus. This Campylobacter jejuni subsp. jejuni serotype O:23/36 (strain 81-176) protein is Methionyl-tRNA formyltransferase.